We begin with the raw amino-acid sequence, 308 residues long: Ribosomal RNA large subunit methyltransferase F (308 aa).

This sequence belongs to the methyltransferase superfamily. METTL16/RlmF family.

The protein localises to the cytoplasm. It catalyses the reaction adenosine(1618) in 23S rRNA + S-adenosyl-L-methionine = N(6)-methyladenosine(1618) in 23S rRNA + S-adenosyl-L-homocysteine + H(+). Specifically methylates the adenine in position 1618 of 23S rRNA. The chain is Ribosomal RNA large subunit methyltransferase F from Escherichia coli O157:H7.